The sequence spans 297 residues: HTH-type transcriptional regulator ArgP (297 aa).

Residues 4 to 60 enclose the HTH lysR-type domain; that stretch reads PDYRTLQALDAVIRERGFERAAQKLCITQSAVSQRIKQLENMFGQPLLVRTVPPRPT. The segment at residues 21–40 is a DNA-binding region (H-T-H motif); sequence FERAAQKLCITQSAVSQRIK.

This sequence belongs to the LysR transcriptional regulatory family. As to quaternary structure, homodimer.

Its function is as follows. Controls the transcription of genes involved in arginine and lysine metabolism. This is HTH-type transcriptional regulator ArgP from Citrobacter koseri (strain ATCC BAA-895 / CDC 4225-83 / SGSC4696).